An 819-amino-acid polypeptide reads, in one-letter code: USP6 N-terminal-like protein (819 aa).

The residue at position 1 (Met1) is an N-acetylmethionine. One can recognise a Rab-GAP TBC domain in the interval 100–292; the sequence is GIPLQLRGEV…RIWDIYIFEG (193 aa). Basic and acidic residues predominate over residues 355–367; it reads DLPEPGKEDEYPK. Disordered regions lie at residues 355–498 and 513–678; these read DLPE…ERTT and LPVA…SRPT. 3 positions are modified to phosphoserine: Ser389, Ser394, and Ser398. 2 stretches are compositionally biased toward basic and acidic residues: residues 399–414 and 432–449; these read SRRE…EHSP and KSVD…ESQR. Residues 464-476 show a composition bias toward low complexity; that stretch reads HAAANQNSNAISN. 2 stretches are compositionally biased toward basic and acidic residues: residues 477-489 and 533-542; these read VRKE…RKPS and KALDGGEGKR. Phosphoserine is present on residues Ser544 and Ser547. A compositionally biased stretch (basic and acidic residues) spans 556–571; the sequence is ESEHGASAEEGPERTH. Phosphoserine occurs at positions 574, 631, 644, 648, 665, 669, and 704. The segment covering 642–655 has biased composition (polar residues); sequence FVSTQISPRPQINP. Tyr717 carries the post-translational modification Phosphotyrosine. A compositionally biased stretch (low complexity) spans 788 to 802; the sequence is ASPPGYPYAGPSPSA. Residues 788–807 are disordered; that stretch reads ASPPGYPYAGPSPSAHHYRN.

As to quaternary structure, interacts with EPS8.

It is found in the golgi apparatus. The protein resides in the cytoplasmic vesicle. Functionally, acts as a GTPase-activating protein for RAB5A and RAB43. Involved in receptor trafficking. In complex with EPS8 inhibits internalization of EGFR. Involved in retrograde transport from the endocytic pathway to the Golgi apparatus. Involved in the transport of Shiga toxin from early and recycling endosomes to the trans-Golgi network. Required for structural integrity of the Golgi complex. In Mus musculus (Mouse), this protein is USP6 N-terminal-like protein (Usp6nl).